An 827-amino-acid chain; its full sequence is Rho GTPase-activating protein 6 (827 aa).

The PH domain occupies 18–125 (TVYKSGPLFI…WKAALEQALA (108 aa)). The Rho-GAP domain maps to 172–371 (LALEEIDGSP…ALLEDYGNMI (200 aa)). Disordered regions lie at residues 379 to 437 (CSTS…SDYA) and 517 to 561 (YTTS…SSGN). Residues 401–412 (IVVKHPDLHTLD) show a composition bias toward basic and acidic residues. Residues 413 to 423 (IEEGETDDDND) show a composition bias toward acidic residues. Positions 517 to 543 (YTTSAEKPASKTTGSSTVNSKRSSSWG) are enriched in polar residues. A coiled-coil region spans residues 560–684 (GNDELLIQRL…HQLSQQRQHH (125 aa)).

Acts as a GTPase activator for the Rac-type GTPase by converting it to an inactive GDP-bound state. The protein is Rho GTPase-activating protein 6 (ROPGAP6) of Arabidopsis thaliana (Mouse-ear cress).